The chain runs to 419 residues: Serine/threonine-protein kinase Kist (419 aa).

One can recognise a Protein kinase domain in the interval tryptophan 23–phenylalanine 304. ATP is bound by residues leucine 29 to valine 37 and lysine 54. Catalysis depends on proton acceptor residues aspartate 141 and aspartate 158. Residues arginine 324–leucine 406 enclose the RRM domain.

It belongs to the protein kinase superfamily. Ser/Thr protein kinase family. In terms of assembly, interacts with stathmin and CDKN1B/p27Kip1 Interacts with PAM. In the embryo, preferentially expressed in the developing nervous system.

The protein localises to the cytoplasm. It localises to the nucleus. It carries out the reaction L-seryl-[protein] + ATP = O-phospho-L-seryl-[protein] + ADP + H(+). It catalyses the reaction L-threonyl-[protein] + ATP = O-phospho-L-threonyl-[protein] + ADP + H(+). In terms of biological role, upon serum stimulation, phosphorylates CDKN1B/p27Kip1, thus controlling CDKN1B subcellular location and cell cycle progression in G1 phase. May be involved in trafficking and/or processing of RNA. The polypeptide is Serine/threonine-protein kinase Kist (Uhmk1) (Rattus norvegicus (Rat)).